The chain runs to 59 residues: Conotoxin Ts-03 (59 aa).

Residues Met-1–Ser-19 form the signal peptide. Residues Val-20–Ala-47 constitute a propeptide that is removed on maturation.

The protein belongs to the conotoxin T superfamily. In terms of processing, contains 2 disulfide bonds that can be either 'C1-C3, C2-C4' or 'C1-C4, C2-C3', since these disulfide connectivities have been observed for conotoxins with cysteine framework V (for examples, see AC P0DQQ7 and AC P81755). Expressed by the venom duct.

It localises to the secreted. This Conus tessulatus (Tessellate cone) protein is Conotoxin Ts-03.